Reading from the N-terminus, the 344-residue chain is Acireductone dioxygenase (344 aa).

Positions 92, 94, 98, and 137 each coordinate Fe(2+). Residues histidine 92, histidine 94, glutamate 98, and histidine 137 each contribute to the Ni(2+) site.

Belongs to the acireductone dioxygenase (ARD) family. The cofactor is Fe(2+). Ni(2+) serves as cofactor.

It localises to the cytoplasm. It is found in the nucleus. The enzyme catalyses 1,2-dihydroxy-5-(methylsulfanyl)pent-1-en-3-one + O2 = 4-methylsulfanyl-2-oxobutanoate + formate + 2 H(+). It catalyses the reaction 1,2-dihydroxy-5-(methylsulfanyl)pent-1-en-3-one + O2 = 3-(methylsulfanyl)propanoate + CO + formate + 2 H(+). It functions in the pathway amino-acid biosynthesis; L-methionine biosynthesis via salvage pathway; L-methionine from S-methyl-5-thio-alpha-D-ribose 1-phosphate: step 5/6. Functionally, catalyzes 2 different reactions between oxygen and the acireductone 1,2-dihydroxy-3-keto-5-methylthiopentene (DHK-MTPene) depending upon the metal bound in the active site. Fe-containing acireductone dioxygenase (Fe-ARD) produces formate and 2-keto-4-methylthiobutyrate (KMTB), the alpha-ketoacid precursor of methionine in the methionine recycle pathway. Ni-containing acireductone dioxygenase (Ni-ARD) produces methylthiopropionate, carbon monoxide and formate, and does not lie on the methionine recycle pathway. This chain is Acireductone dioxygenase, found in Leishmania major.